We begin with the raw amino-acid sequence, 768 residues long: Valine--tRNA ligase (768 aa).

The 'HIGH' region motif lies at 37-47 (PTVSGKMHMGH). A 'KMSKS' region motif is present at residues 510–514 (KMSKS). ATP is bound at residue Lys513.

Belongs to the class-I aminoacyl-tRNA synthetase family. ValS type 2 subfamily.

It is found in the cytoplasm. The enzyme catalyses tRNA(Val) + L-valine + ATP = L-valyl-tRNA(Val) + AMP + diphosphate. Catalyzes the attachment of valine to tRNA(Val). As ValRS can inadvertently accommodate and process structurally similar amino acids such as threonine, to avoid such errors, it has a 'posttransfer' editing activity that hydrolyzes mischarged Thr-tRNA(Val) in a tRNA-dependent manner. The chain is Valine--tRNA ligase from Picrophilus torridus (strain ATCC 700027 / DSM 9790 / JCM 10055 / NBRC 100828 / KAW 2/3).